Consider the following 295-residue polypeptide: tRNA-cytidine(32) 2-sulfurtransferase (295 aa).

The PP-loop motif signature appears at 63-68 (SGGKDS). Residues Cys-138, Cys-141, and Cys-229 each contribute to the [4Fe-4S] cluster site.

The protein belongs to the TtcA family. In terms of assembly, homodimer. It depends on Mg(2+) as a cofactor. [4Fe-4S] cluster is required as a cofactor.

It is found in the cytoplasm. It carries out the reaction cytidine(32) in tRNA + S-sulfanyl-L-cysteinyl-[cysteine desulfurase] + AH2 + ATP = 2-thiocytidine(32) in tRNA + L-cysteinyl-[cysteine desulfurase] + A + AMP + diphosphate + H(+). It participates in tRNA modification. Functionally, catalyzes the ATP-dependent 2-thiolation of cytidine in position 32 of tRNA, to form 2-thiocytidine (s(2)C32). The sulfur atoms are provided by the cysteine/cysteine desulfurase (IscS) system. This is tRNA-cytidine(32) 2-sulfurtransferase from Hyphomonas neptunium (strain ATCC 15444).